The following is a 472-amino-acid chain: UDP-N-acetylmuramate--L-alanine ligase (472 aa).

119–125 (GTHGKTT) serves as a coordination point for ATP.

It belongs to the MurCDEF family.

It is found in the cytoplasm. The catalysed reaction is UDP-N-acetyl-alpha-D-muramate + L-alanine + ATP = UDP-N-acetyl-alpha-D-muramoyl-L-alanine + ADP + phosphate + H(+). It functions in the pathway cell wall biogenesis; peptidoglycan biosynthesis. Functionally, cell wall formation. The protein is UDP-N-acetylmuramate--L-alanine ligase of Caulobacter sp. (strain K31).